Reading from the N-terminus, the 780-residue chain is MTHEEHHAAKTLGIGKAIAVLTSGGDAQGMNAAVRAVVRVGIFTGARVFFVHEGYQGLVDGGDNIKEATWESVSMMLQLGGTVIGSARCKDFREREGRLRAAYNLVKRGITNLCVIGGDGSLTGADTFRSEWSELLGDLQKAGKITDEEATKSSYLNIVGLVGSIDNDFCGTDMTIGTDSALHRIIEIVDAITTTAQSHQRTFVLEVMGRHCGYLALVTSLSCGADWVFIPECPPDDDWEEHLCRRLSETRTRGSRLNIIIVAEGAIDRNGKPITSEDIKNLVVKRLGYDTRVTVLGHVQRGGTPSAFDRILGSRMGVEAVMALLEGTPDTPACVVSLSGNQAVRLPLMECVQVTKDVTKAMEEKKFDEALKLRGRSFMNNWEVYKLLAHVRPPVSKSGSHTVAVMNVGAPAAGMNAAVRSTVRIGLIQGNRVLVVHDGFEGLAKGQIEEAGWSYVGGWTGQGGSKLGTKRTLPKKSFEQISANITKFNIQGLVIIGGFEAYTGGLELMEGRKQFDELCIPFVVIPATVSNNVPGSDFSVGADTALNTICTTCDRIKQSAAGTKRRVFIIETMGGYCGYLATMAGLAAGADAAYIFEEPFTIRDLQANVEHLVQKMKTTVKRGLVLRNEKCNENYTTDFIFNLYSEEGKGIFDSRKNVLGHMQQGGSPTPFDRNFATKMGAKAMNWMSGIIKESYRNGRIFANTPDSGCVLGMRKRALLFQPVTELQGQTDFEHRIPKEQWWLKLRPILKILAKYEIDLDTSDHAHLEHITRKRSGEGAV.

The residue at position 2 (T2) is an N-acetylthreonine. The interval 2 to 390 (THEEHHAAKT…NWEVYKLLAH (389 aa)) is N-terminal catalytic PFK domain 1. ATP contacts are provided by residues G25, 88–89 (RC), and 118–121 (GDGS). D119 provides a ligand contact to Mg(2+). Phosphoserine is present on S133. Substrate-binding positions include 164 to 166 (SID), R201, 208 to 210 (MGR), E264, R292, and 298 to 301 (HVQR). Residue D166 is the Proton acceptor of the active site. S377 carries the phosphoserine modification. The interdomain linker stretch occupies residues 391 to 401 (VRPPVSKSGSH). Residues 402-780 (TVAVMNVGAP…TRKRSGEGAV (379 aa)) are C-terminal regulatory PFK domain 2. Beta-D-fructose 2,6-bisphosphate is bound by residues R471 and 528 to 532 (TVSNN). S530 carries O-linked (GlcNAc) serine glycosylation. Position 557 is an N6-(2-hydroxyisobutyryl)lysine (K557). Beta-D-fructose 2,6-bisphosphate-binding positions include R566, 573–575 (MGG), E629, R655, and 661–664 (HMQQ). Position 667 is a phosphoserine (S667). R735 contributes to the beta-D-fructose 2,6-bisphosphate binding site. S775 is modified (phosphoserine).

Belongs to the phosphofructokinase type A (PFKA) family. ATP-dependent PFK group I subfamily. Eukaryotic two domain clade 'E' sub-subfamily. As to quaternary structure, homo- and heterotetramers. Phosphofructokinase (PFK) enzyme functions as a tetramer composed of different combinations of 3 types of subunits, called PFKM (M), PFKL (L) and PFKP (P). The composition of the PFK tetramer differs according to the tissue type it is present in. The kinetic and regulatory properties of the tetrameric enzyme are dependent on the subunit composition, hence can vary across tissues. Interacts (via C-terminus) with HK1 (via N-terminal spermatogenic cell-specific region). It depends on Mg(2+) as a cofactor. Post-translationally, glcNAcylation decreases enzyme activity.

It localises to the cytoplasm. It carries out the reaction beta-D-fructose 6-phosphate + ATP = beta-D-fructose 1,6-bisphosphate + ADP + H(+). It functions in the pathway carbohydrate degradation; glycolysis; D-glyceraldehyde 3-phosphate and glycerone phosphate from D-glucose: step 3/4. With respect to regulation, allosterically activated by ADP, AMP, or fructose 2,6-bisphosphate, and allosterically inhibited by ATP or citrate. Functionally, catalyzes the phosphorylation of D-fructose 6-phosphate to fructose 1,6-bisphosphate by ATP, the first committing step of glycolysis. The protein is ATP-dependent 6-phosphofructokinase, muscle type (PFKM) of Macaca fascicularis (Crab-eating macaque).